The following is a 1199-amino-acid chain: Tubulin monoglutamylase TTLL4 (1199 aa).

The segment covering 1 to 25 has biased composition (polar residues); that stretch reads MASAGTQHYSIGLRQKNSFKQSGPS. Disordered regions lie at residues 1–43, 472–517, and 525–544; these read MASA…RVWP, IQLG…ELVD, and RDEN…SAVS. Basic and acidic residues predominate over residues 477–495; the sequence is SEKERPEEARELDSSDRDI. Positions 506–517 are enriched in acidic residues; the sequence is AETEDTEEELVD. In terms of domain architecture, TTL spans 604 to 947; it reads RKLLRWKMST…VLPNAEDIIS (344 aa). Serine 691 is subject to Phosphoserine. ATP contacts are provided by residues lysine 721, 727-728, 749-752, and 762-764; these read RG, QRYL, and KFD. An a protein-binding site is contributed by arginine 727. Arginine 788 serves as a coordination point for L-glutamate. Position 809–810 (809–810) interacts with ATP; that stretch reads TN. Residues tyrosine 811, serine 812, and lysine 833 each contribute to the L-glutamate site. 3 residues coordinate Mg(2+): aspartate 893, glutamate 906, and asparagine 908. A c-MTBD region region spans residues 918–1029; sequence PLDISIKGQM…RGQFERIFPS (112 aa). Residue lysine 924 participates in L-glutamate binding. A compositionally biased stretch (polar residues) spans 1130–1141; sequence GTTPKSKKTQAG. The tract at residues 1130 to 1199 is disordered; sequence GTTPKSKKTQ…ISDSLLAVSP (70 aa). The span at 1151–1160 shows a compositional bias: basic and acidic residues; that stretch reads SSKDSEDTSK. Residues 1164–1192 are compositionally biased toward polar residues; sequence LSTQTLPVIKCSGQTSRLSASSTFQSISD.

It belongs to the tubulin--tyrosine ligase family. Mg(2+) is required as a cofactor.

Its subcellular location is the cytoplasm. The protein localises to the cell projection. It is found in the cilium. The protein resides in the cytoskeleton. It localises to the cilium basal body. The catalysed reaction is L-glutamyl-[protein] + L-glutamate + ATP = gamma-L-glutamyl-L-glutamyl-[protein] + ADP + phosphate + H(+). In terms of biological role, monoglutamylase which modifies both tubulin and non-tubulin proteins, adding a single glutamate on the gamma-carboxyl group of specific glutamate residues of target proteins. Involved in the side-chain initiation step of the polyglutamylation reaction but not in the elongation step. Preferentially modifies beta-tail tubulin over the alpha-tubulin. Monoglutamylates nucleosome assembly proteins NAP1L1 and NAP1L4. Monoglutamylates nucleotidyltransferase CGAS, leading to inhibition of CGAS catalytic activity, thereby preventing antiviral defense function. Involved in KLF4 glutamylation which impedes its ubiquitination, thereby leading to somatic cell reprogramming, pluripotency maintenance and embryogenesis. The chain is Tubulin monoglutamylase TTLL4 from Homo sapiens (Human).